We begin with the raw amino-acid sequence, 125 residues long: Phosphoribosyl-AMP cyclohydrolase (125 aa).

Asp74 provides a ligand contact to Mg(2+). Cys75 contacts Zn(2+). Residues Asp76 and Asp78 each contribute to the Mg(2+) site. Residues Cys92 and Cys99 each contribute to the Zn(2+) site.

The protein belongs to the PRA-CH family. Homodimer. It depends on Mg(2+) as a cofactor. The cofactor is Zn(2+).

It localises to the cytoplasm. It catalyses the reaction 1-(5-phospho-beta-D-ribosyl)-5'-AMP + H2O = 1-(5-phospho-beta-D-ribosyl)-5-[(5-phospho-beta-D-ribosylamino)methylideneamino]imidazole-4-carboxamide. Its pathway is amino-acid biosynthesis; L-histidine biosynthesis; L-histidine from 5-phospho-alpha-D-ribose 1-diphosphate: step 3/9. Functionally, catalyzes the hydrolysis of the adenine ring of phosphoribosyl-AMP. The polypeptide is Phosphoribosyl-AMP cyclohydrolase (Pelobacter propionicus (strain DSM 2379 / NBRC 103807 / OttBd1)).